We begin with the raw amino-acid sequence, 196 residues long: Phosphate-specific transport system accessory protein PhoU homolog (196 aa).

The protein belongs to the PhoU family. Homodimer.

The protein localises to the cytoplasm. Functionally, plays a role in the regulation of phosphate uptake. This chain is Phosphate-specific transport system accessory protein PhoU homolog, found in Archaeoglobus fulgidus (strain ATCC 49558 / DSM 4304 / JCM 9628 / NBRC 100126 / VC-16).